The following is a 282-amino-acid chain: Acetyl-coenzyme A carboxylase carboxyl transferase subunit beta (282 aa).

In terms of domain architecture, CoA carboxyltransferase N-terminal spans 29-282; that stretch reads LPINCPSCSA…LSSLLGLHQG (254 aa). 4 residues coordinate Zn(2+): cysteine 33, cysteine 36, cysteine 52, and cysteine 55. The C4-type zinc finger occupies 33–55; sequence CPSCSARIAAEALQRNLKVCPKC.

This sequence belongs to the AccD/PCCB family. As to quaternary structure, acetyl-CoA carboxylase is a heterohexamer composed of biotin carboxyl carrier protein (AccB), biotin carboxylase (AccC) and two subunits each of ACCase subunit alpha (AccA) and ACCase subunit beta (AccD). Requires Zn(2+) as cofactor.

The protein resides in the cytoplasm. The enzyme catalyses N(6)-carboxybiotinyl-L-lysyl-[protein] + acetyl-CoA = N(6)-biotinyl-L-lysyl-[protein] + malonyl-CoA. It functions in the pathway lipid metabolism; malonyl-CoA biosynthesis; malonyl-CoA from acetyl-CoA: step 1/1. Component of the acetyl coenzyme A carboxylase (ACC) complex. Biotin carboxylase (BC) catalyzes the carboxylation of biotin on its carrier protein (BCCP) and then the CO(2) group is transferred by the transcarboxylase to acetyl-CoA to form malonyl-CoA. The protein is Acetyl-coenzyme A carboxylase carboxyl transferase subunit beta of Syntrophomonas wolfei subsp. wolfei (strain DSM 2245B / Goettingen).